Here is a 149-residue protein sequence, read N- to C-terminus: MTDLAAIKIVRLDKELPLPKRAHRGDAGVDLHATTDAVIAPGHREIVGTGIAIALPLGTVGLVHPRSGLAAREGLSIVNAPGTIDADYRGEIKVCLINLDPEKPIMITRGDRIAQLVIQKVELVDFEEVEELDDTVRGDQGYGSTGKTA.

Residues 66 to 68 (RSG), Asn-79, 83 to 85 (TID), and Lys-93 each bind substrate.

Belongs to the dUTPase family. Mg(2+) is required as a cofactor.

It catalyses the reaction dUTP + H2O = dUMP + diphosphate + H(+). Its pathway is pyrimidine metabolism; dUMP biosynthesis; dUMP from dCTP (dUTP route): step 2/2. Functionally, this enzyme is involved in nucleotide metabolism: it produces dUMP, the immediate precursor of thymidine nucleotides and it decreases the intracellular concentration of dUTP so that uracil cannot be incorporated into DNA. This is Deoxyuridine 5'-triphosphate nucleotidohydrolase from Corynebacterium glutamicum (strain ATCC 13032 / DSM 20300 / JCM 1318 / BCRC 11384 / CCUG 27702 / LMG 3730 / NBRC 12168 / NCIMB 10025 / NRRL B-2784 / 534).